A 217-amino-acid chain; its full sequence is N-(5'-phosphoribosyl)anthranilate isomerase (217 aa).

The protein belongs to the TrpF family.

The catalysed reaction is N-(5-phospho-beta-D-ribosyl)anthranilate = 1-(2-carboxyphenylamino)-1-deoxy-D-ribulose 5-phosphate. It participates in amino-acid biosynthesis; L-tryptophan biosynthesis; L-tryptophan from chorismate: step 3/5. This chain is N-(5'-phosphoribosyl)anthranilate isomerase, found in Synechococcus sp. (strain ATCC 27144 / PCC 6301 / SAUG 1402/1) (Anacystis nidulans).